The sequence spans 230 residues: Uracil-DNA glycosylase (230 aa).

Aspartate 65 (proton acceptor) is an active-site residue.

It belongs to the uracil-DNA glycosylase (UDG) superfamily. UNG family.

The protein resides in the cytoplasm. The enzyme catalyses Hydrolyzes single-stranded DNA or mismatched double-stranded DNA and polynucleotides, releasing free uracil.. In terms of biological role, excises uracil residues from the DNA which can arise as a result of misincorporation of dUMP residues by DNA polymerase or due to deamination of cytosine. The protein is Uracil-DNA glycosylase of Lactiplantibacillus plantarum (strain ATCC BAA-793 / NCIMB 8826 / WCFS1) (Lactobacillus plantarum).